We begin with the raw amino-acid sequence, 147 residues long: RxLR effector protein Avr3a (147 aa).

A signal peptide spans 1-21; that stretch reads MRLAIMLSATAVAINFATSSA. A RxLR-dEER motif is present at residues 44-59; it reads RLLRKNEENEETSEER. K48 bears the N6-acetyllysine mark. The tract at residues 77–147 is effector domain; sequence ALTERADAKK…YMMHLGLTGY (71 aa).

It belongs to the RxLR effector family. Forms homodimers via the RxLR-dEER motif. Interacts with host E3 ligase CMPG1. Interacts with host DRP2. In terms of processing, proteolytically cleaved. The cleavage site directly after the RxLR sequence and the high conservation among other effector proteins suggest that the RxLR motif might play a crucial role in the intracellular processing before secretion. Post-translationally, glycosylated. N-acetylated at Lys-48 after cleavage.

The protein resides in the secreted. It localises to the host cytoplasm. In terms of biological role, multifunctional effector that can suppress host BAK1/SERK3-mediated immunity through at least two different pathways. Manipulates plant immunity by targeting and stabilizing host E3 ligase CMPG1. Preventing the normal 26S proteasome-dependent degradation of potato CMPG1, and thus potentially of its protein substrates in the host cell, further abolishes host cell death during the biotrophic phase of infection. Also associates with and affects the function of the dynamin-related protein 2 (DRP2), a plant GTPase involved in immune receptor-mediated endocytosis. The Avr3a(EM) form evades recognition by R3a, thus does not trigger R3a-mediated hypersensitivity and does not suppress INF1-induced cell death. The sequence is that of RxLR effector protein Avr3a from Phytophthora infestans (Potato late blight agent).